The following is a 301-amino-acid chain: Syntaxin-17 (301 aa).

At Ser2 the chain carries N-acetylserine. Over Ser2–Lys227 the chain is Cytoplasmic. Lys41 carries the N6-acetyllysine modification. Positions Asp49–Gln128 form a coiled coil. Position 156 is a phosphotyrosine; by ABL1 (Tyr156). The region spanning Ile161 to Ala223 is the t-SNARE coiled-coil homology domain. The chain crosses the membrane as a helical span at residues Leu228 to Leu248. Residues Leu228 to Ile274 are necessary and sufficient for localization to autophagosome. The Lumenal portion of the chain corresponds to Leu249–Lys253. A helical membrane pass occupies residues Val254–Ile274. The interval Leu273 to Ser301 is required for interaction with COPB1, TMED9 and TMED10. Residues Gln275–Ser301 lie on the Cytoplasmic side of the membrane. Position 288 is a phosphoserine (Ser288). The Endoplasmic reticulum retention signal signature appears at Lys298–Ser301.

This sequence belongs to the syntaxin family. Forms a SNARE complex composed of VAMP8, SNAP29 and STX17 involved in fusion of autophagosome with lysosome. May interact with VAMP7. May interact with VTI1B. Probably interacts with BET1, SCFD1 and SEC22B. Interacts with PTPN2 and ABL1; involved in STX17 phosphorylation. Interacts with COPB1. Interacts with TMED9 and TMED10; the interaction is direct. Interacts with RUBCNL/PACER; promoting targeting of RUBCNL/PACER to autophagosome. Interacts with VAMP8, SNAP29, VPS39 and VPS41; these interactions are increased in the absence of TMEM39A. Interacts with IRGM; promoting STX17 recruitment to autophagosomes. Interacts with ATG8 proteins GABARAP and MAP1LC3B. Interacts with RNF115; this interaction enhances STX17 stability which in turn promotes autophagosome maturation. Interacts with RAB39A (GTP-bound); the interaction promotes autophagosome-lysosome membrane fusion driven by STX17-SNAP29-VAMP8. Interacts with RAB39B; the interaction may promote a different fonction in autophagy as compared with RAB39A. Phosphorylated at Tyr-156 probably by ABL1. Dephosphorylation by PTPN2; regulates exit from the endoplasmic reticulum. Detected in all tissues examined with higher expression in steroidogenic tissues including testis and adrenal gland (at protein level). Highly expressed in liver and testis. Also found in brain, heart, kidney, lung, placenta, skeletal muscle and spleen.

Its subcellular location is the endoplasmic reticulum membrane. It localises to the smooth endoplasmic reticulum membrane. The protein resides in the endoplasmic reticulum-Golgi intermediate compartment membrane. The protein localises to the cytoplasmic vesicle. It is found in the autophagosome membrane. Its subcellular location is the COPII-coated vesicle membrane. It localises to the cytoplasm. The protein resides in the cytosol. The protein localises to the mitochondrion membrane. It is found in the autolysosome membrane. Functionally, SNAREs, soluble N-ethylmaleimide-sensitive factor-attachment protein receptors, are essential proteins for fusion of cellular membranes. SNAREs localized on opposing membranes assemble to form a trans-SNARE complex, an extended, parallel four alpha-helical bundle that drives membrane fusion. STX17 is a SNARE of the autophagosome involved in autophagy through the direct control of autophagosome membrane fusion with the lysosome membrane. May also play a role in the early secretory pathway where it may maintain the architecture of the endoplasmic reticulum-Golgi intermediate compartment/ERGIC and Golgi and/or regulate transport between the endoplasmic reticulum, the ERGIC and the Golgi. The sequence is that of Syntaxin-17 from Rattus norvegicus (Rat).